Here is a 396-residue protein sequence, read N- to C-terminus: MSQKWVQTQAWLGFPDVPISQEDKPDEYSTFLGGFPVFFDGCSLNPNIIKCGNCKNLCRLLLQCYAPLEGDNLKERALYVWGCHNPSCRRVPNSIVCVRGVRLPLKSDIEAVKSPKAISHLEEKKSSPKEKKVNPFAITSESSRGLNPFSDATSANNPFSLSTDVNPSKPSSNVFSKPSFAAKAQQSITDQQKTQAKTKTKHIALTTSGMSVHPPVTETYTYPVTEAFQGMFLGLDLEYVPQNKVNSKKDDFSTFKNYTPYLNDSSEAWEKESYEKSPSVYEKTFRLFSEKISHNPTQCLRYERGGTPLLASGRDKLGQQLKSVTNFGKSPVPLCPLCKSPRLFEMQLMPHAISILNDEIAEWSTILVATCSMDCNPPINKDRVGYAVEWVGIQWD.

This sequence belongs to the TSR4 family.

The protein localises to the cytoplasm. It localises to the nucleus. The protein resides in the nucleolus. Its function is as follows. Required for processing of the 20S pre-rRNA at site D to generate mature 18S rRNA. The sequence is that of Probable 20S rRNA accumulation protein 4 from Schizosaccharomyces pombe (strain 972 / ATCC 24843) (Fission yeast).